The chain runs to 45 residues: Large ribosomal subunit protein bL36 (45 aa).

It belongs to the bacterial ribosomal protein bL36 family.

The sequence is that of Large ribosomal subunit protein bL36 from Psychrobacter sp. (strain PRwf-1).